Here is an 897-residue protein sequence, read N- to C-terminus: Protein transport protein SEC24-1 (897 aa).

Zn(2+)-binding residues include cysteine 213, cysteine 216, cysteine 235, and cysteine 238. The interval 213-238 is zinc finger-like; it reads CRRCRSYINPFAKFIEQGRRWRCNFC.

The protein belongs to the SEC23/SEC24 family. SEC24 subfamily. The COPII coat is composed of at least 5 proteins: the SEC23/24 complex, the SEC13/31 complex, and the protein SAR1. Golgi apparatus membrane; Peripheral membrane protein; Cytoplasmic side.

It is found in the cytoplasm. Its subcellular location is the cytoplasmic vesicle. The protein resides in the COPII-coated vesicle membrane. The protein localises to the endoplasmic reticulum membrane. It localises to the golgi apparatus membrane. Functionally, component of the coat protein complex II (COPII) which promotes the formation of transport vesicles from the endoplasmic reticulum (ER). The coat has two main functions, the physical deformation of the endoplasmic reticulum membrane into vesicles and the selection of cargo molecules. In Candida glabrata (strain ATCC 2001 / BCRC 20586 / JCM 3761 / NBRC 0622 / NRRL Y-65 / CBS 138) (Yeast), this protein is Protein transport protein SEC24-1 (SEC241).